A 345-amino-acid polypeptide reads, in one-letter code: MVLFKAKFSFQRRVKLAQTLWLLSWLSVLVGCLTFGMGIFLKVQLWIHNEVMDNTTAHAVPNTVITAGLVGILLGYFAGKISQASMDLTKYQRWKSFMMPFFFLAILSCIVCLAALVLSVALRGTLEESLKIGLRNAIRFYKDTDTPGRCYQKRSMDKLEMDFQCCGNNHPKDWFEVQWISNRYLDFSSKEVKDRIKSSVDGRYLMDSVPFTCCNPSSPRPCIQIEITNNSAHYSYNFQGDDVNIWVRGCREALLGYYTGIMATNGAAVTLSFLLQASVLVSLRYVQTSMDKIRDPDDVEADTEGFLLEKGVMETVNSSLEKIKDLFKSNQVETAEGGGEGAAGS.

Residues 1–24 (MVLFKAKFSFQRRVKLAQTLWLLS) are Cytoplasmic-facing. Residues 25–43 (WLSVLVGCLTFGMGIFLKV) traverse the membrane as a helical segment. Residues 44 to 61 (QLWIHNEVMDNTTAHAVP) are Lumenal-facing. N-linked (GlcNAc...) asparagine glycosylation occurs at N54. Residues 62 to 80 (NTVITAGLVGILLGYFAGK) form a helical membrane-spanning segment. Topologically, residues 81 to 99 (ISQASMDLTKYQRWKSFMM) are cytoplasmic. The helical transmembrane segment at 100 to 123 (PFFFLAILSCIVCLAALVLSVALR) threads the bilayer. Residues 124–264 (GTLEESLKIG…LGYYTGIMAT (141 aa)) are Lumenal-facing. N229 carries N-linked (GlcNAc...) asparagine glycosylation. The chain crosses the membrane as a helical span at residues 265–290 (NGAAVTLSFLLQASVLVSLRYVQTSM). Residues 291–345 (DKIRDPDDVEADTEGFLLEKGVMETVNSSLEKIKDLFKSNQVETAEGGGEGAAGS) are Cytoplasmic-facing.

The protein belongs to the PRPH2/ROM1 family. In terms of assembly, homodimer; disulfide-linked. In terms of tissue distribution, rod specific.

Its subcellular location is the membrane. This is RDS/peripherin-like protein xRDS36 (rds36) from Xenopus laevis (African clawed frog).